The sequence spans 156 residues: Small ribosomal subunit protein uS7 (156 aa).

It belongs to the universal ribosomal protein uS7 family. As to quaternary structure, part of the 30S ribosomal subunit. Contacts proteins S9 and S11.

Its function is as follows. One of the primary rRNA binding proteins, it binds directly to 16S rRNA where it nucleates assembly of the head domain of the 30S subunit. Is located at the subunit interface close to the decoding center, probably blocks exit of the E-site tRNA. This chain is Small ribosomal subunit protein uS7, found in Gemmatimonas aurantiaca (strain DSM 14586 / JCM 11422 / NBRC 100505 / T-27).